The chain runs to 176 residues: Ribosome maturation factor RimP (176 aa).

The disordered stretch occupies residues 143 to 176 (LKPQTAKKKGRQEETEDMTLELDAVSRAVPEAEI).

Belongs to the RimP family.

The protein resides in the cytoplasm. In terms of biological role, required for maturation of 30S ribosomal subunits. In Chlorobium luteolum (strain DSM 273 / BCRC 81028 / 2530) (Pelodictyon luteolum), this protein is Ribosome maturation factor RimP.